Consider the following 216-residue polypeptide: Probable transaldolase (216 aa).

Lys83 (schiff-base intermediate with substrate) is an active-site residue.

It belongs to the transaldolase family. Type 3B subfamily.

The protein resides in the cytoplasm. The catalysed reaction is D-sedoheptulose 7-phosphate + D-glyceraldehyde 3-phosphate = D-erythrose 4-phosphate + beta-D-fructose 6-phosphate. It participates in carbohydrate degradation; pentose phosphate pathway; D-glyceraldehyde 3-phosphate and beta-D-fructose 6-phosphate from D-ribose 5-phosphate and D-xylulose 5-phosphate (non-oxidative stage): step 2/3. In terms of biological role, transaldolase is important for the balance of metabolites in the pentose-phosphate pathway. The protein is Probable transaldolase of Thermosipho africanus (strain TCF52B).